The chain runs to 124 residues: Large-conductance mechanosensitive channel (124 aa).

A run of 3 helical transmembrane segments spans residues 14 to 34 (VIDL…VQSL), 37 to 57 (NLIN…NLVF), and 67 to 87 (GSFI…FLIV).

It belongs to the MscL family. In terms of assembly, homopentamer.

It localises to the cell membrane. Functionally, channel that opens in response to stretch forces in the membrane lipid bilayer. May participate in the regulation of osmotic pressure changes within the cell. The sequence is that of Large-conductance mechanosensitive channel from Lactobacillus acidophilus (strain ATCC 700396 / NCK56 / N2 / NCFM).